Here is a 378-residue protein sequence, read N- to C-terminus: Formate dehydrogenase 2, mitochondrial (378 aa).

Residues 1 to 18 (MAMWRAPSAAGQLLGRAL) constitute a mitochondrion transit peptide. Substrate is bound by residues Val122 and Asn146. NAD(+) contacts are provided by residues Thr147, 201 to 202 (RI), Asp221, 256 to 260 (PLTEK), Asn282, Asp308, and 332 to 335 (HCSG).

This sequence belongs to the D-isomer specific 2-hydroxyacid dehydrogenase family. FDH subfamily. Homodimer.

The protein localises to the mitochondrion. The catalysed reaction is formate + NAD(+) = CO2 + NADH. In terms of biological role, catalyzes the NAD(+)-dependent oxidation of formate to carbon dioxide. Involved in the cell stress response. This is Formate dehydrogenase 2, mitochondrial from Oryza sativa subsp. japonica (Rice).